An 883-amino-acid chain; its full sequence is Alanine--tRNA ligase (883 aa).

Zn(2+) is bound by residues histidine 570, histidine 574, cysteine 672, and histidine 676.

It belongs to the class-II aminoacyl-tRNA synthetase family. Requires Zn(2+) as cofactor.

It is found in the cytoplasm. It carries out the reaction tRNA(Ala) + L-alanine + ATP = L-alanyl-tRNA(Ala) + AMP + diphosphate. Functionally, catalyzes the attachment of alanine to tRNA(Ala) in a two-step reaction: alanine is first activated by ATP to form Ala-AMP and then transferred to the acceptor end of tRNA(Ala). Also edits incorrectly charged Ser-tRNA(Ala) and Gly-tRNA(Ala) via its editing domain. In Heliobacterium modesticaldum (strain ATCC 51547 / Ice1), this protein is Alanine--tRNA ligase.